The sequence spans 920 residues: Probable helicase HelY (920 aa).

One can recognise a Helicase ATP-binding domain in the interval 26 to 184 (CAALERGHGV…WVQTVRGDTT (159 aa)). 39–46 (APTGAGKT) is a binding site for ATP. The DEVH box motif lies at 132–135 (DEVH). The Helicase C-terminal domain occupies 265–469 (EVIAILDAEG…SYNMTINLVH (205 aa)).

This sequence belongs to the helicase family. SKI2 subfamily.

This Mycobacterium leprae (strain TN) protein is Probable helicase HelY (helY).